We begin with the raw amino-acid sequence, 71 residues long: Translation initiation factor IF-1 (71 aa).

The S1-like domain occupies Met1–Tyr71.

Belongs to the IF-1 family. As to quaternary structure, component of the 30S ribosomal translation pre-initiation complex which assembles on the 30S ribosome in the order IF-2 and IF-3, IF-1 and N-formylmethionyl-tRNA(fMet); mRNA recruitment can occur at any time during PIC assembly.

It is found in the cytoplasm. Its function is as follows. One of the essential components for the initiation of protein synthesis. Stabilizes the binding of IF-2 and IF-3 on the 30S subunit to which N-formylmethionyl-tRNA(fMet) subsequently binds. Helps modulate mRNA selection, yielding the 30S pre-initiation complex (PIC). Upon addition of the 50S ribosomal subunit IF-1, IF-2 and IF-3 are released leaving the mature 70S translation initiation complex. This chain is Translation initiation factor IF-1, found in Christiangramia forsetii (strain DSM 17595 / CGMCC 1.15422 / KT0803) (Gramella forsetii).